The sequence spans 203 residues: V-type ATP synthase subunit D (203 aa).

It belongs to the V-ATPase D subunit family.

Functionally, produces ATP from ADP in the presence of a proton gradient across the membrane. In Streptococcus pneumoniae serotype 19F (strain G54), this protein is V-type ATP synthase subunit D.